The primary structure comprises 1101 residues: Leucine-rich repeat receptor-like serine/threonine-protein kinase At1g17230 (1101 aa).

A signal peptide spans 1–23 (MRGRICFLAIVILCSFSFILVRS). Topologically, residues 24–734 (LNEEGRVLLE…WLINGSQRQK (711 aa)) are extracellular. N-linked (GlcNAc...) asparagine glycosylation is found at asparagine 39, asparagine 57, asparagine 78, and asparagine 97. LRR repeat units lie at residues 66–90 (LRTVTSVDLNGMNLSGTLSPLICKL), 91–115 (HGLRKLNVSTNFISGPIPQDLSLCR), 117–137 (LEVLDLCTNRFHGVIPIQLTM), 138–162 (IITLKKLYLCENYLFGSIPRQIGNL), 163–186 (SSLQELVIYSNNLTGVIPPSMAKL), 188–210 (QLRIIRAGRNGFSGVIPSEISGC), 211–234 (ESLKVLGLAENLLEGSLPKQLEKL), 235–258 (QNLTDLILWQNRLSGEIPPSVGNI), 260–282 (RLEVLALHENYFTGSIPREIGKL), 283–306 (TKMKRLYLYTNQLTGEIPREIGNL), 308–329 (DAAEIDFSENQLTGFIPKEFGH), 330–354 (ILNLKLLHLFENILLGPIPRELGEL), 355–379 (TLLEKLDLSINRLNGTIPQELQFLP), 381–402 (LVDLQLFDNQLEGKIPPLIGFY), 403–426 (SNFSVLDMSANSLSGPIPAHFCRF), 427–450 (QTLILLSLGSNKLSGNIPRDLKTC), 451–474 (KSLTKLMLGDNQLTGSLPIELFNL), 476–498 (NLTALELHQNWLSGNISADLGKL), 499–522 (KNLERLRLANNNFTGEIPPEIGNL), 524–546 (KIVGFNISSNQLTGHIPKELGSC), 548–569 (TIQRLDLSGNKFSGYIAQELGQ), 570–593 (LVYLEILRLSDNRLTGEIPHSFGD), 595–618 (TRLMELQLGGNLLSENIPVELGKL), 619–643 (TSLQISLNISHNNLSGTIPDSLGNL), 644–667 (QMLEILYLNDNKLSGEIPASIGNL), and 669–692 (SLLICNISNNNLVGTVPDTAVFQR). Asparagine 161 and asparagine 174 each carry an N-linked (GlcNAc...) asparagine glycan. N-linked (GlcNAc...) asparagine glycans are attached at residues asparagine 236 and asparagine 257. N-linked (GlcNAc...) asparagine glycosylation occurs at asparagine 368. Residue asparagine 404 is glycosylated (N-linked (GlcNAc...) asparagine). N-linked (GlcNAc...) asparagine glycosylation is found at asparagine 476, asparagine 490, asparagine 510, asparagine 521, and asparagine 529. N-linked (GlcNAc...) asparagine glycans are attached at residues asparagine 626 and asparagine 631. N-linked (GlcNAc...) asparagine glycosylation is found at asparagine 674 and asparagine 728. A helical membrane pass occupies residues 735–755 (ILTITCIVIGSVFLITFLGLC). The Cytoplasmic portion of the chain corresponds to 756–1101 (WTIKRREPAF…LEEANSSKEI (346 aa)). Phosphothreonine is present on residues threonine 788 and threonine 796. A Protein kinase domain is found at 799-1081 (FSEDVVLGRG…ITEARGSSSL (283 aa)). Residues 805 to 813 (LGRGACGTV) and lysine 827 each bind ATP. Residues tyrosine 874 and tyrosine 913 each carry the phosphotyrosine modification. The active-site Proton acceptor is aspartate 926. Serine 960 bears the Phosphoserine mark. 2 positions are modified to phosphotyrosine: tyrosine 968 and tyrosine 975. Threonine 976 carries the phosphothreonine modification. Residues 1076–1101 (RGSSSLSSSSITSETPLEEANSSKEI) form a disordered region. Over residues 1078–1088 (SSSLSSSSITS) the composition is skewed to low complexity.

It belongs to the protein kinase superfamily. Ser/Thr protein kinase family.

The protein resides in the cell membrane. It catalyses the reaction L-seryl-[protein] + ATP = O-phospho-L-seryl-[protein] + ADP + H(+). The catalysed reaction is L-threonyl-[protein] + ATP = O-phospho-L-threonyl-[protein] + ADP + H(+). This chain is Leucine-rich repeat receptor-like serine/threonine-protein kinase At1g17230, found in Arabidopsis thaliana (Mouse-ear cress).